Here is a 192-residue protein sequence, read N- to C-terminus: Putative molybdenum cofactor guanylyltransferase (192 aa).

GTP-binding positions include 8 to 10 (LAG), Lys21, Asp67, and Asp101. Asp101 serves as a coordination point for Mg(2+).

Belongs to the MobA family. Monomer. Mg(2+) is required as a cofactor.

The protein resides in the cytoplasm. It carries out the reaction Mo-molybdopterin + GTP + H(+) = Mo-molybdopterin guanine dinucleotide + diphosphate. In terms of biological role, transfers a GMP moiety from GTP to Mo-molybdopterin (Mo-MPT) cofactor (Moco or molybdenum cofactor) to form Mo-molybdopterin guanine dinucleotide (Mo-MGD) cofactor. The sequence is that of Putative molybdenum cofactor guanylyltransferase from Neisseria meningitidis serogroup B (strain ATCC BAA-335 / MC58).